Consider the following 1069-residue polypeptide: Protocadherin-7 (1069 aa).

The first 28 residues, 1–28 (MLRMRTAGWARGWCLGCCLLLPLSLSLA), serve as a signal peptide directing secretion. 7 consecutive Cadherin domains span residues 29–143 (AAKQ…TPTF), 144–308 (PSPV…SPRF), 309–415 (EKSV…VPSI), 424–535 (PLKD…PPMF), 536–639 (GQSV…DPKF), 640–742 (MQDV…APTV), and 745–862 (PKNI…IPLT). The Extracellular portion of the chain corresponds to 29 to 879 (AAKQLLRYRL…SYEISKQRLS (851 aa)). Residue asparagine 79 is glycosylated (N-linked (GlcNAc...) asparagine). The segment at 182 to 242 (LLQEPGGGGS…GGTNPGGRSS (61 aa)) is disordered. Positions 207–221 (PGGGGNGASGGGSGG) are enriched in gly residues. N-linked (GlcNAc...) asparagine glycosylation is found at asparagine 689, asparagine 747, asparagine 780, asparagine 822, asparagine 840, and asparagine 845. A helical transmembrane segment spans residues 880-900 (IVIGVVAGIMTVILIILIVVM). Over 901-1069 (ARYCRSKNKN…RLHPYITVFG (169 aa)) the chain is Cytoplasmic. Residues 910 to 988 (NGYEAGKKDH…RYRSVNGGPG (79 aa)) are disordered. Basic residues predominate over residues 930–944 (KSKKPKKDKKNKKSK). Phosphoserine occurs at positions 989 and 1011.

In terms of tissue distribution, expressed predominantly in brain and heart and at lower levels in various other tissues.

Its subcellular location is the cell membrane. This is Protocadherin-7 (PCDH7) from Homo sapiens (Human).